The sequence spans 104 residues: N(4)-acetylcytidine amidohydrolase (104 aa).

The region spanning 7–104 is the ASCH domain; the sequence is TFFTRFEQDI…FWVIAFELVD (98 aa). The active-site Proton acceptor is Lys-21. The active-site Nucleophile is the Thr-24. Glu-74 (proton donor) is an active-site residue.

This sequence belongs to the N(4)-acetylcytidine amidohydrolase family.

It catalyses the reaction N(4)-acetylcytidine + H2O = cytidine + acetate + H(+). The catalysed reaction is N(4)-acetyl-2'-deoxycytidine + H2O = 2'-deoxycytidine + acetate + H(+). It carries out the reaction N(4)-acetylcytosine + H2O = cytosine + acetate + H(+). Functionally, catalyzes the hydrolysis of N(4)-acetylcytidine (ac4C). This chain is N(4)-acetylcytidine amidohydrolase, found in Pasteurella multocida (strain Pm70).